The sequence spans 74 residues: Protein SlyX homolog (74 aa).

A disordered region spans residues 52–74 (LKQMQENQSTDSDPADEPPPPHY).

It belongs to the SlyX family.

The sequence is that of Protein SlyX homolog from Idiomarina loihiensis (strain ATCC BAA-735 / DSM 15497 / L2-TR).